Reading from the N-terminus, the 469-residue chain is DNA repair and recombination protein rad22 (469 aa).

Residues 265-296 (PAANNHHSEKAGTQINNKDKGSHNSAKPVQRS) form a disordered region. Positions 287–296 (HNSAKPVQRS) are enriched in polar residues. Phosphoserine occurs at positions 296 and 319. A disordered region spans residues 429 to 469 (LHDSTTSHNKSDLMRTNSDPQSAMRSRENYDATVDKKAKKG). Over residues 431–452 (DSTTSHNKSDLMRTNSDPQSAM) the composition is skewed to polar residues. Over residues 453 to 469 (RSRENYDATVDKKAKKG) the composition is skewed to basic and acidic residues.

Belongs to the RAD52 family. As to quaternary structure, interacts with rhp51.

It is found in the nucleus. Functionally, active in the repair of DNA damage and in mating-type switching. Probably involved in the repair of DNA double-strands breaks. Has a role in promoting S phase completion. This Schizosaccharomyces pombe (strain 972 / ATCC 24843) (Fission yeast) protein is DNA repair and recombination protein rad22 (rad22).